Here is a 156-residue protein sequence, read N- to C-terminus: MDALIAQLQRQFRDYTISLYQQGFLDDQFTELKKLQDDGSPDFVSEVLSLFFEDCVKLISNMARALDTTGTVDFSQVGASVHQLKGSSSSVGAKRVKTLCVSFKECCEAKNYEGCVRCLQQVDIEYKALKTKLQDMFNLEKQIIQAGGIVPQVDIN.

N-acetylmethionine is present on Met-1. Positions 40–147 constitute an HPt domain; the sequence is SPDFVSEVLS…NLEKQIIQAG (108 aa). Phosphohistidine is present on His-82.

Interacts with the B-type response regulators ARR1, ARR2 and ARR10. Binds to AHK1, AHK2, AHK3, AHK4, AHK5, ETR1 and CKI1. In terms of processing, two-component system major event consists of a His-to-Asp phosphorelay between a sensor histidine kinase (HK) and a response regulator (RR). In plants, the His-to-Asp phosphorelay involves an additional intermediate named Histidine-containing phosphotransfer protein (HPt). This multistep phosphorelay consists of a His-Asp-His-Asp sequential transfer of a phosphate group between first a His and an Asp of the HK protein, followed by the transfer to a conserved His of the HPt protein and finally the transfer to an Asp in the receiver domain of the RR protein. In terms of tissue distribution, strongly expressed in flowers and roots. Detected also in leaves, siliques and stems.

The protein resides in the cytoplasm. Its subcellular location is the cytosol. It localises to the nucleus. Its function is as follows. Functions as a two-component phosphorelay mediators between cytokinin sensor histidine kinases and response regulator (B-type ARRs). Plays an important role in propagating cytokinin signal transduction through the multistep His-to-Asp phosphorelay. In Arabidopsis thaliana (Mouse-ear cress), this protein is Histidine-containing phosphotransfer protein 2 (AHP2).